The primary structure comprises 353 residues: Stomatin-like protein 2, mitochondrial (353 aa).

A mitochondrion-targeting transit peptide spans 1-28 (MLARAARGTGALLLRGSVQASGRIPRRA). A Phosphoserine; by PKC/PRKCZ modification is found at S17. Position 124 is a phosphotyrosine (Y124). N6-acetyllysine; alternate is present on K145. Position 145 is an N6-succinyllysine; alternate (K145). A coiled-coil region spans residues 215–252 (INVAEGKKQAQILASEAEKAEQINQAAGEASAVLAKAK). An N6-acetyllysine modification is found at K233. The disordered stretch occupies residues 324–353 (VPGAQNSSEARRDVQTTDTSIEELGRVKLS). Phosphoserine is present on S330.

Belongs to the band 7/mec-2 family. Forms homooligomers. Interacts with MFN2; may form heterooligomers. Interacts with PHB1 and PHB2; recruits them to cardiolipin-enriched mitochondrial membranes and stabilizes them. Interacts with CACNA2D2.

It is found in the cell membrane. Its subcellular location is the mitochondrion. The protein localises to the mitochondrion inner membrane. It localises to the mitochondrion intermembrane space. The protein resides in the membrane raft. It is found in the cytoplasm. Its subcellular location is the cytoskeleton. Its function is as follows. Mitochondrial protein that probably regulates the biogenesis and the activity of mitochondria. Stimulates cardiolipin biosynthesis, binds cardiolipin-enriched membranes where it recruits and stabilizes some proteins including prohibitin and may therefore act in the organization of functional microdomains in mitochondrial membranes. Through regulation of the mitochondrial function may play a role into several biological processes including cell migration, cell proliferation, T-cell activation, calcium homeostasis and cellular response to stress. May play a role in calcium homeostasis through negative regulation of calcium efflux from mitochondria. Required for mitochondrial hyperfusion a pro-survival cellular response to stress which results in increased ATP production by mitochondria. May also regulate the organization of functional domains at the plasma membrane and play a role in T-cell activation through association with the T-cell receptor signaling complex and its regulation. This chain is Stomatin-like protein 2, mitochondrial (Stoml2), found in Rattus norvegicus (Rat).